Reading from the N-terminus, the 399-residue chain is Methylthioribose kinase (399 aa).

ATP-binding positions include asparagine 40, lysine 57, and 111–113 (EDL). Aspartate 229 lines the substrate pocket. ATP is bound at residue 246–248 (DAE). Arginine 344 contributes to the substrate binding site.

Belongs to the methylthioribose kinase family. In terms of assembly, homodimer.

It catalyses the reaction 5-(methylsulfanyl)-D-ribose + ATP = 5-(methylsulfanyl)-alpha-D-ribose 1-phosphate + ADP + H(+). Its pathway is amino-acid biosynthesis; L-methionine biosynthesis via salvage pathway; S-methyl-5-thio-alpha-D-ribose 1-phosphate from S-methyl-5'-thioadenosine (hydrolase route): step 2/2. Functionally, catalyzes the phosphorylation of methylthioribose into methylthioribose-1-phosphate. The chain is Methylthioribose kinase from Enterobacter sp. (strain 638).